Here is a 192-residue protein sequence, read N- to C-terminus: MSKPSDRINLTNQFLIAMPNMADPTFSGTVVYLCDHSERGALGLVINRPTDIDLESLFNRIDLKLDIEPLLHIPVYFGGPVQTERGFVLHEPVEGANYNSSMSIEGGLEMTTSKDVLEAVATGTGPKRFLLTLGHAGWGAGQLEEEISRNGWLTVPADPRIVFDTPAEERFEAALGLLGVSSSMLSGEAGHA.

The protein belongs to the UPF0301 (AlgH) family.

In Burkholderia vietnamiensis (strain G4 / LMG 22486) (Burkholderia cepacia (strain R1808)), this protein is UPF0301 protein Bcep1808_0798.